Here is a 200-residue protein sequence, read N- to C-terminus: Probable fatty acid desaturase MIMI_L630 (200 aa).

2 helical membrane-spanning segments follow: residues 9–29 (FIQIVLGYLLSDFIMGIYHWI) and 79–99 (IGPLFFWFGLTPFLVTMFIMI).

It belongs to the fatty acid desaturase CarF family.

It is found in the membrane. The sequence is that of Probable fatty acid desaturase MIMI_L630 from Acanthamoeba polyphaga mimivirus (APMV).